We begin with the raw amino-acid sequence, 343 residues long: Holliday junction branch migration complex subunit RuvB (343 aa).

A large ATPase domain (RuvB-L) region spans residues 1–178 (MNFVQQNREG…FGMILELQFY (178 aa)). ATP contacts are provided by residues L17, R18, G59, K62, T63, T64, 125–127 (EDY), R168, Y178, and R215. Residue T63 participates in Mg(2+) binding. The small ATPAse domain (RuvB-S) stretch occupies residues 179–249 (TVKELMEIIK…LVEKTMDILE (71 aa)). A head domain (RuvB-H) region spans residues 252–343 (KLGLDEMDRK…DESLRKSDES (92 aa)). 2 residues coordinate DNA: R307 and R312.

Belongs to the RuvB family. In terms of assembly, homohexamer. Forms an RuvA(8)-RuvB(12)-Holliday junction (HJ) complex. HJ DNA is sandwiched between 2 RuvA tetramers; dsDNA enters through RuvA and exits via RuvB. An RuvB hexamer assembles on each DNA strand where it exits the tetramer. Each RuvB hexamer is contacted by two RuvA subunits (via domain III) on 2 adjacent RuvB subunits; this complex drives branch migration. In the full resolvosome a probable DNA-RuvA(4)-RuvB(12)-RuvC(2) complex forms which resolves the HJ.

The protein localises to the cytoplasm. The catalysed reaction is ATP + H2O = ADP + phosphate + H(+). Functionally, the RuvA-RuvB-RuvC complex processes Holliday junction (HJ) DNA during genetic recombination and DNA repair, while the RuvA-RuvB complex plays an important role in the rescue of blocked DNA replication forks via replication fork reversal (RFR). RuvA specifically binds to HJ cruciform DNA, conferring on it an open structure. The RuvB hexamer acts as an ATP-dependent pump, pulling dsDNA into and through the RuvAB complex. RuvB forms 2 homohexamers on either side of HJ DNA bound by 1 or 2 RuvA tetramers; 4 subunits per hexamer contact DNA at a time. Coordinated motions by a converter formed by DNA-disengaged RuvB subunits stimulates ATP hydrolysis and nucleotide exchange. Immobilization of the converter enables RuvB to convert the ATP-contained energy into a lever motion, pulling 2 nucleotides of DNA out of the RuvA tetramer per ATP hydrolyzed, thus driving DNA branch migration. The RuvB motors rotate together with the DNA substrate, which together with the progressing nucleotide cycle form the mechanistic basis for DNA recombination by continuous HJ branch migration. Branch migration allows RuvC to scan DNA until it finds its consensus sequence, where it cleaves and resolves cruciform DNA. The sequence is that of Holliday junction branch migration complex subunit RuvB from Pseudothermotoga lettingae (strain ATCC BAA-301 / DSM 14385 / NBRC 107922 / TMO) (Thermotoga lettingae).